The sequence spans 154 residues: Putative pre-16S rRNA nuclease (154 aa).

This sequence belongs to the YqgF nuclease family.

The protein resides in the cytoplasm. Could be a nuclease involved in processing of the 5'-end of pre-16S rRNA. The chain is Putative pre-16S rRNA nuclease from Gluconacetobacter diazotrophicus (strain ATCC 49037 / DSM 5601 / CCUG 37298 / CIP 103539 / LMG 7603 / PAl5).